The following is an 835-amino-acid chain: Protein translocase subunit SecA (835 aa).

Residues Gln-85, 103-107, and Asp-492 contribute to the ATP site; that span reads GEGKT. A disordered region spans residues 788 to 807; sequence VQGEAVHPSSDGEEAKKKPV. Zn(2+)-binding residues include Cys-819, Cys-821, Cys-830, and Cys-831.

The protein belongs to the SecA family. Monomer and homodimer. Part of the essential Sec protein translocation apparatus which comprises SecA, SecYEG and auxiliary proteins SecDF. Other proteins may also be involved. The cofactor is Zn(2+).

The protein resides in the cell membrane. The protein localises to the cytoplasm. The enzyme catalyses ATP + H2O + cellular proteinSide 1 = ADP + phosphate + cellular proteinSide 2.. In terms of biological role, part of the Sec protein translocase complex. Interacts with the SecYEG preprotein conducting channel. Has a central role in coupling the hydrolysis of ATP to the transfer of proteins into and across the cell membrane, serving as an ATP-driven molecular motor driving the stepwise translocation of polypeptide chains across the membrane. This Bacillus cereus (strain G9842) protein is Protein translocase subunit SecA.